A 552-amino-acid chain; its full sequence is Urocanate hydratase (552 aa).

Residues 49–50 (GG), glutamine 127, 173–175 (GMG), aspartate 193, 239–240 (NA), 260–264 (QTSAH), 270–271 (YV), and tyrosine 319 each bind NAD(+). Cysteine 407 is a catalytic residue. Glycine 489 serves as a coordination point for NAD(+).

It belongs to the urocanase family. NAD(+) serves as cofactor.

The protein localises to the cytoplasm. It carries out the reaction 4-imidazolone-5-propanoate = trans-urocanate + H2O. It participates in amino-acid degradation; L-histidine degradation into L-glutamate; N-formimidoyl-L-glutamate from L-histidine: step 2/3. Catalyzes the conversion of urocanate to 4-imidazolone-5-propionate. The polypeptide is Urocanate hydratase (Bacillus cytotoxicus (strain DSM 22905 / CIP 110041 / 391-98 / NVH 391-98)).